We begin with the raw amino-acid sequence, 573 residues long: MKASQFFISTLKEAPADAEIVSHKLMMRAGMIKKLGAGIYNYMPIGLRVIRKVENIVREEMNRAGAVELSMPVIQPAELWQETGRWDKMGPELLRLKDRHERDFAVQPTSEEVVTDIARSEIRSYKQLPVNFYQIQTKFRDERRPRFGIMRGREFTMKDAYSFDRDTDGLRKSYENMYDAYVRIFRRFGLEFRAVAADNGAIGGSGSHEFHVIAETGEDAIVYCPTSAYAANMEAAEALPLVAERAAPTQDLVKTFTPEKVKCEQVAEFLNIPLETNVKSIVLATDSDAGPQIWLLLIRADHELNEVKASKVPGLAEFRFATENEIVEAFGSPPGYLGPIDMKKPVKVVADRTVANMSDFVCGANYRDYHYTGVNWGRDLPEPIVADLRNVVAGDASPDGQGTLEICRGIEVGHVFMLGTRYSESMNATFLDENGKTQPMQMGCYGIGITRILGAAIEQNFDERGIIWPAAIAPFAVVICPVGYDRSEAVKAEADRIHAELLAAGVDVILDDRGERPGVMFADWELIGVPHRVVVGDRGLKEGKVEYQGRRDAQATAVSVAEVVGHVRSLLAN.

Belongs to the class-II aminoacyl-tRNA synthetase family. ProS type 1 subfamily. In terms of assembly, homodimer.

Its subcellular location is the cytoplasm. It carries out the reaction tRNA(Pro) + L-proline + ATP = L-prolyl-tRNA(Pro) + AMP + diphosphate. Functionally, catalyzes the attachment of proline to tRNA(Pro) in a two-step reaction: proline is first activated by ATP to form Pro-AMP and then transferred to the acceptor end of tRNA(Pro). As ProRS can inadvertently accommodate and process non-cognate amino acids such as alanine and cysteine, to avoid such errors it has two additional distinct editing activities against alanine. One activity is designated as 'pretransfer' editing and involves the tRNA(Pro)-independent hydrolysis of activated Ala-AMP. The other activity is designated 'posttransfer' editing and involves deacylation of mischarged Ala-tRNA(Pro). The misacylated Cys-tRNA(Pro) is not edited by ProRS. The chain is Proline--tRNA ligase from Cupriavidus taiwanensis (strain DSM 17343 / BCRC 17206 / CCUG 44338 / CIP 107171 / LMG 19424 / R1) (Ralstonia taiwanensis (strain LMG 19424)).